We begin with the raw amino-acid sequence, 146 residues long: D-aminoacyl-tRNA deacylase (146 aa).

Residues 137-138 (GP) carry the Gly-cisPro motif, important for rejection of L-amino acids motif.

The protein belongs to the DTD family. As to quaternary structure, homodimer.

The protein localises to the cytoplasm. The catalysed reaction is glycyl-tRNA(Ala) + H2O = tRNA(Ala) + glycine + H(+). It catalyses the reaction a D-aminoacyl-tRNA + H2O = a tRNA + a D-alpha-amino acid + H(+). Functionally, an aminoacyl-tRNA editing enzyme that deacylates mischarged D-aminoacyl-tRNAs. Also deacylates mischarged glycyl-tRNA(Ala), protecting cells against glycine mischarging by AlaRS. Acts via tRNA-based rather than protein-based catalysis; rejects L-amino acids rather than detecting D-amino acids in the active site. By recycling D-aminoacyl-tRNA to D-amino acids and free tRNA molecules, this enzyme counteracts the toxicity associated with the formation of D-aminoacyl-tRNA entities in vivo and helps enforce protein L-homochirality. The sequence is that of D-aminoacyl-tRNA deacylase from Bacillus cereus (strain B4264).